Here is a 304-residue protein sequence, read N- to C-terminus: N-acetyl-D-glucosamine kinase (304 aa).

Residues 4–11 (GFDMGGTK) and 133–140 (GVGGGLIV) each bind ATP. Residues His157, Cys177, Cys179, and Cys184 each coordinate Zn(2+).

Belongs to the ROK (NagC/XylR) family. NagK subfamily.

It catalyses the reaction N-acetyl-D-glucosamine + ATP = N-acetyl-D-glucosamine 6-phosphate + ADP + H(+). Its pathway is cell wall biogenesis; peptidoglycan recycling. Its function is as follows. Catalyzes the phosphorylation of N-acetyl-D-glucosamine (GlcNAc) derived from cell-wall degradation, yielding GlcNAc-6-P. The polypeptide is N-acetyl-D-glucosamine kinase (Yersinia pseudotuberculosis serotype IB (strain PB1/+)).